The primary structure comprises 428 residues: C4-dicarboxylate transport protein (428 aa).

Helical transmembrane passes span Ser8–Pro28, Leu44–Met64, Val76–Val96, Ile142–Phe162, Val184–Met204, Leu222–Ala242, Ile326–Val346, and Ile352–Ile372.

The protein belongs to the dicarboxylate/amino acid:cation symporter (DAACS) (TC 2.A.23) family.

It localises to the cell inner membrane. Responsible for the transport of dicarboxylates such as succinate, fumarate, and malate from the periplasm across the membrane. The sequence is that of C4-dicarboxylate transport protein from Enterobacter sp. (strain 638).